Here is a 75-residue protein sequence, read N- to C-terminus: Putative membrane protein insertion efficiency factor (75 aa).

It belongs to the UPF0161 family.

The protein resides in the cell membrane. Its function is as follows. Could be involved in insertion of integral membrane proteins into the membrane. The sequence is that of Putative membrane protein insertion efficiency factor from Bacillus cytotoxicus (strain DSM 22905 / CIP 110041 / 391-98 / NVH 391-98).